The chain runs to 389 residues: tRNA(Met) cytidine acetate ligase (389 aa).

ATP contacts are provided by residues 8 to 21, Gly-97, Asn-153, and Arg-176; that span reads IAEF…HEYL.

This sequence belongs to the TmcAL family.

It localises to the cytoplasm. It carries out the reaction cytidine(34) in elongator tRNA(Met) + acetate + ATP = N(4)-acetylcytidine(34) in elongator tRNA(Met) + AMP + diphosphate. Functionally, catalyzes the formation of N(4)-acetylcytidine (ac(4)C) at the wobble position of elongator tRNA(Met), using acetate and ATP as substrates. First activates an acetate ion to form acetyladenylate (Ac-AMP) and then transfers the acetyl group to tRNA to form ac(4)C34. This is tRNA(Met) cytidine acetate ligase from Lactococcus lactis subsp. lactis (strain IL1403) (Streptococcus lactis).